We begin with the raw amino-acid sequence, 154 residues long: Gene 35 protein (154 aa).

A disordered region spans residues 116-137 (LTAAQDDPVEGGPEPADVADTI).

It belongs to the herpesviridae UL96 family.

In Equus caballus (Horse), this protein is Gene 35 protein (35).